Here is a 425-residue protein sequence, read N- to C-terminus: Histidine--tRNA ligase (425 aa).

This sequence belongs to the class-II aminoacyl-tRNA synthetase family. As to quaternary structure, homodimer.

It is found in the cytoplasm. It carries out the reaction tRNA(His) + L-histidine + ATP = L-histidyl-tRNA(His) + AMP + diphosphate + H(+). This chain is Histidine--tRNA ligase, found in Shewanella sp. (strain W3-18-1).